Here is a 514-residue protein sequence, read N- to C-terminus: tRNA-2-methylthio-N(6)-dimethylallyladenosine synthase (514 aa).

Residues 1-21 form a disordered region; that stretch reads MNEEQRKASSVDVLAERDKKA. An MTTase N-terminal domain is found at 68–186; that stretch reads RTFLIKTYGC…LPEILEEAYL (119 aa). Cys-77, Cys-113, Cys-147, Cys-223, Cys-227, and Cys-230 together coordinate [4Fe-4S] cluster. The 232-residue stretch at 209–440 folds into the Radical SAM core domain; the sequence is REGNIKAWVN…KKVGHYSQIA (232 aa). Residues 442–505 form the TRAM domain; the sequence is SKYEGQTVTV…QYSLNGSFVK (64 aa).

The protein belongs to the methylthiotransferase family. MiaB subfamily. Monomer. [4Fe-4S] cluster is required as a cofactor.

Its subcellular location is the cytoplasm. The catalysed reaction is N(6)-dimethylallyladenosine(37) in tRNA + (sulfur carrier)-SH + AH2 + 2 S-adenosyl-L-methionine = 2-methylsulfanyl-N(6)-dimethylallyladenosine(37) in tRNA + (sulfur carrier)-H + 5'-deoxyadenosine + L-methionine + A + S-adenosyl-L-homocysteine + 2 H(+). In terms of biological role, catalyzes the methylthiolation of N6-(dimethylallyl)adenosine (i(6)A), leading to the formation of 2-methylthio-N6-(dimethylallyl)adenosine (ms(2)i(6)A) at position 37 in tRNAs that read codons beginning with uridine. This Staphylococcus aureus (strain MRSA252) protein is tRNA-2-methylthio-N(6)-dimethylallyladenosine synthase.